We begin with the raw amino-acid sequence, 223 residues long: Ribose-5-phosphate isomerase A (223 aa).

Residues 28–31 (TGTT), 81–84 (DSAD), and 94–97 (KGGG) each bind substrate. Glu103 (proton acceptor) is an active-site residue. Lys121 lines the substrate pocket.

The protein belongs to the ribose 5-phosphate isomerase family. In terms of assembly, homodimer.

The enzyme catalyses aldehydo-D-ribose 5-phosphate = D-ribulose 5-phosphate. It participates in carbohydrate degradation; pentose phosphate pathway; D-ribose 5-phosphate from D-ribulose 5-phosphate (non-oxidative stage): step 1/1. Catalyzes the reversible conversion of ribose-5-phosphate to ribulose 5-phosphate. The chain is Ribose-5-phosphate isomerase A from Buchnera aphidicola subsp. Acyrthosiphon pisum (strain 5A).